Here is a 506-residue protein sequence, read N- to C-terminus: MFSLQDLCRKNLFLPLEPLGKHVVQRLGLYWKGHGSLKQMGQCFVCIDQTWILSIHKALQIAASEGNEDIVKLLILWNGNLKYAIIGALEGRHYDLIQKYYNQIGDCHEILPLIQDPKIYERCHELNVTCTFQCLFQHAIKDNMLPILQKYGQDLNGNRRMVQLLYEMACRLQNYDIIKWIGFNLQVYNLEAIFSIAFVRKDLTLYSLGYMLLLNRMSTEDRNFISIITRHLEYASKKGLLDFVLESLKYGGQVDTVLFQAVKYNHRKILAHFIHHVPREIVEKLILHAVESRASRKTFNLLLSSINYCMNPFVKKLLHAVVKHKFMLIIKLLLERPKKKINLVNAALFKLVKYSTYPEIVKYMKEFSVNPEMVIKMAARLMRVDLIKKISKDAWENKLERIKHLKQMVHTMNHRNGKNLIMYNIYDITGYTYLNAKEAFNLTRFYAVHNATCLFKEMCKNCFVHDLIQLRELLEDCLHIANRHAYIQIAETANEYIKYIDDITPK.

ANK repeat units lie at residues 54–83, 253–283, and 313–343; these read SIHK…NLKY, QVDT…EIVE, and FVKK…KINL.

It belongs to the asfivirus MGF 505 family.

Functionally, plays a role in virus cell tropism, and may be required for efficient virus replication in macrophages. The polypeptide is Protein MGF 505-9R (African swine fever virus (isolate Tick/Malawi/Lil 20-1/1983) (ASFV)).